A 200-amino-acid polypeptide reads, in one-letter code: GTP cyclohydrolase 1 (200 aa).

Zn(2+)-binding residues include C87, H90, and C158.

This sequence belongs to the GTP cyclohydrolase I family. Toroid-shaped homodecamer, composed of two pentamers of five dimers.

It catalyses the reaction GTP + H2O = 7,8-dihydroneopterin 3'-triphosphate + formate + H(+). Its pathway is cofactor biosynthesis; 7,8-dihydroneopterin triphosphate biosynthesis; 7,8-dihydroneopterin triphosphate from GTP: step 1/1. This is GTP cyclohydrolase 1 from Xanthomonas euvesicatoria pv. vesicatoria (strain 85-10) (Xanthomonas campestris pv. vesicatoria).